A 92-amino-acid polypeptide reads, in one-letter code: Small ribosomal subunit protein uS19c (92 aa).

The protein belongs to the universal ribosomal protein uS19 family.

The protein localises to the plastid. The protein resides in the chloroplast. In terms of biological role, protein S19 forms a complex with S13 that binds strongly to the 16S ribosomal RNA. The protein is Small ribosomal subunit protein uS19c (rps19) of Trieres chinensis (Marine centric diatom).